The chain runs to 276 residues: NAD-capped RNA hydrolase NudC (276 aa).

R82 lines the substrate pocket. 2 residues coordinate Zn(2+): C112 and C115. A substrate-binding site is contributed by E125. Zn(2+) contacts are provided by C130 and C133. Y138 provides a ligand contact to substrate. Residues 139–262 enclose the Nudix hydrolase domain; sequence PRISPSMIVL…SIARYLIDLY (124 aa). A divalent metal cation contacts are provided by A172, E188, and E192. The short motif at 173–194 is the Nudix box element; that stretch reads GFAEPGESAEDCLVREVREEVA. Residue 206 to 213 coordinates substrate; it reads QCWPFPHS. E233 is a binding site for a divalent metal cation. A255 contacts substrate.

The protein belongs to the Nudix hydrolase family. NudC subfamily. Homodimer. Requires Mg(2+) as cofactor. Mn(2+) is required as a cofactor. The cofactor is Zn(2+).

It carries out the reaction a 5'-end NAD(+)-phospho-ribonucleoside in mRNA + H2O = a 5'-end phospho-adenosine-phospho-ribonucleoside in mRNA + beta-nicotinamide D-ribonucleotide + 2 H(+). The enzyme catalyses NAD(+) + H2O = beta-nicotinamide D-ribonucleotide + AMP + 2 H(+). It catalyses the reaction NADH + H2O = reduced beta-nicotinamide D-ribonucleotide + AMP + 2 H(+). MRNA decapping enzyme that specifically removes the nicotinamide adenine dinucleotide (NAD) cap from a subset of mRNAs by hydrolyzing the diphosphate linkage to produce nicotinamide mononucleotide (NMN) and 5' monophosphate mRNA. The NAD-cap is present at the 5'-end of some mRNAs and stabilizes RNA against 5'-processing. Has preference for mRNAs with a 5'-end purine. Catalyzes the hydrolysis of a broad range of dinucleotide pyrophosphates. The chain is NAD-capped RNA hydrolase NudC from Pseudomonas putida (strain GB-1).